The chain runs to 1060 residues: DNA-directed RNA polymerase subunit beta (1060 aa).

This sequence belongs to the RNA polymerase beta chain family. In terms of assembly, in plastids the minimal PEP RNA polymerase catalytic core is composed of four subunits: alpha, beta, beta', and beta''. When a (nuclear-encoded) sigma factor is associated with the core the holoenzyme is formed, which can initiate transcription.

It localises to the plastid. Its subcellular location is the chloroplast. The enzyme catalyses RNA(n) + a ribonucleoside 5'-triphosphate = RNA(n+1) + diphosphate. DNA-dependent RNA polymerase catalyzes the transcription of DNA into RNA using the four ribonucleoside triphosphates as substrates. In Calycanthus floridus var. glaucus (Eastern sweetshrub), this protein is DNA-directed RNA polymerase subunit beta.